Here is a 311-residue protein sequence, read N- to C-terminus: MANPLYQKHIISINDLSRDELNLVLATAAKLKANPQPELLKHKVIASCFFEASTRTRLSFETSMHRLGASVVGFSDSANTSLGKKGETLADTISVISTYVDAIVMRHPQEGAARLATEFSGNVPVLNAGDGSNQHPTQTLLDLFTIQETQGRLDNLHIAMVGDLKYGRTVHSLTQALAKFDGNRFYFIAPDALAMPQYILDMLDEKGIAWSLHSSIEEVMAEVDILYMTRVQKERLDPSEYANVKAQFVLRASDLHNAKTNMKVLHPLPRVDEIATDVDKTPHAWYFQQAGNGIFARQALLALVLNRDLVL.

Residues arginine 55 and threonine 56 each contribute to the carbamoyl phosphate site. Lysine 85 serves as a coordination point for L-aspartate. Arginine 106, histidine 135, and glutamine 138 together coordinate carbamoyl phosphate. L-aspartate is bound by residues arginine 168 and arginine 230. 2 residues coordinate carbamoyl phosphate: leucine 268 and proline 269.

This sequence belongs to the aspartate/ornithine carbamoyltransferase superfamily. ATCase family. As to quaternary structure, heterododecamer (2C3:3R2) of six catalytic PyrB chains organized as two trimers (C3), and six regulatory PyrI chains organized as three dimers (R2).

The catalysed reaction is carbamoyl phosphate + L-aspartate = N-carbamoyl-L-aspartate + phosphate + H(+). Its pathway is pyrimidine metabolism; UMP biosynthesis via de novo pathway; (S)-dihydroorotate from bicarbonate: step 2/3. Catalyzes the condensation of carbamoyl phosphate and aspartate to form carbamoyl aspartate and inorganic phosphate, the committed step in the de novo pyrimidine nucleotide biosynthesis pathway. In Escherichia fergusonii (strain ATCC 35469 / DSM 13698 / CCUG 18766 / IAM 14443 / JCM 21226 / LMG 7866 / NBRC 102419 / NCTC 12128 / CDC 0568-73), this protein is Aspartate carbamoyltransferase catalytic subunit.